Reading from the N-terminus, the 1045-residue chain is Unconventional myosin-Ia (1045 aa).

Positions Ala11–Gln697 constitute a Myosin motor domain. Gly104–Thr111 contributes to the ATP binding site. The actin-binding stretch occupies residues Val574–Asp596. IQ domains lie at Ala701 to Gln727, Met723 to Val750, and Met746 to Ala774. In terms of domain architecture, TH1 spans Lys861–Val1044.

It belongs to the TRAFAC class myosin-kinesin ATPase superfamily. Myosin family. Intestine.

Could play an important role in morphogenesis and function of intestinal microvilli. The sequence is that of Unconventional myosin-Ia (MYO1A) from Gallus gallus (Chicken).